The sequence spans 237 residues: Protein FEV (237 aa).

Positions 47–127 (IQLWQFLLEL…HGKRYAYRFD (81 aa)) form a DNA-binding region, ETS. The may mediate active transcriptional repression stretch occupies residues 129–237 (QGLAQACQPP…AASHLGGHYH (109 aa)).

It belongs to the ETS family. In terms of tissue distribution, expressed in central serotonergic neurons.

The protein localises to the nucleus. Functions as a transcriptional regulator. May function as a transcriptional repressor. Functions in the differentiation and the maintenance of the central serotonergic neurons. May play a role in cell growth. This Mus musculus (Mouse) protein is Protein FEV (Fev).